Consider the following 326-residue polypeptide: MFEIHPIKKVSVVIPVYNEQESLPELINRTTAACESLGKEYEILLIDDGSSDASAQMLVEASQAPDSHIVSILLNRNYGQHSAIMAGFSYVTGDLIITLDADLQNPPEEIPRLVAKADEGYDVVGTVRQNRQDSWFRKTASKMINRLIQRTTGKAMGDYGCMLRAYRRHIVDAMLHCHERSTFIPILANIFARQAVEIPVHHAEREFGESKYSFMRLINLMYDLVTCLTTTPLRMLSLLGSIIATSGFSLAILLVVLRLAFGSQWSGEGVFMLFAVLFTFIGAQFIGMGLLGEYIGRIYNDVRARPRYFVQKVIRPASSIDIEENH.

The Cytoplasmic segment spans residues methionine 1–methionine 235. A helical transmembrane segment spans residues leucine 236 to valine 256. Topologically, residues leucine 257–glycine 269 are periplasmic. A helical membrane pass occupies residues valine 270–leucine 290. The Cytoplasmic segment spans residues leucine 291–histidine 326.

This sequence belongs to the glycosyltransferase 2 family.

It localises to the cell inner membrane. It carries out the reaction UDP-4-deoxy-4-formamido-beta-L-arabinose + di-trans,octa-cis-undecaprenyl phosphate = 4-deoxy-4-formamido-alpha-L-arabinopyranosyl di-trans,octa-cis-undecaprenyl phosphate + UDP. It functions in the pathway glycolipid biosynthesis; 4-amino-4-deoxy-alpha-L-arabinose undecaprenyl phosphate biosynthesis; 4-amino-4-deoxy-alpha-L-arabinose undecaprenyl phosphate from UDP-4-deoxy-4-formamido-beta-L-arabinose and undecaprenyl phosphate: step 1/2. It participates in bacterial outer membrane biogenesis; lipopolysaccharide biosynthesis. Catalyzes the transfer of 4-deoxy-4-formamido-L-arabinose from UDP to undecaprenyl phosphate. The modified arabinose is attached to lipid A and is required for resistance to polymyxin and cationic antimicrobial peptides. The sequence is that of Undecaprenyl-phosphate 4-deoxy-4-formamido-L-arabinose transferase from Escherichia fergusonii (strain ATCC 35469 / DSM 13698 / CCUG 18766 / IAM 14443 / JCM 21226 / LMG 7866 / NBRC 102419 / NCTC 12128 / CDC 0568-73).